We begin with the raw amino-acid sequence, 227 residues long: Biosynthetic peptidoglycan transglycosylase (227 aa).

The chain crosses the membrane as a helical span at residues 7 to 27 (VALLTLLLLVAAPYVLTLVYG).

It belongs to the glycosyltransferase 51 family.

The protein resides in the cell inner membrane. The enzyme catalyses [GlcNAc-(1-&gt;4)-Mur2Ac(oyl-L-Ala-gamma-D-Glu-L-Lys-D-Ala-D-Ala)](n)-di-trans,octa-cis-undecaprenyl diphosphate + beta-D-GlcNAc-(1-&gt;4)-Mur2Ac(oyl-L-Ala-gamma-D-Glu-L-Lys-D-Ala-D-Ala)-di-trans,octa-cis-undecaprenyl diphosphate = [GlcNAc-(1-&gt;4)-Mur2Ac(oyl-L-Ala-gamma-D-Glu-L-Lys-D-Ala-D-Ala)](n+1)-di-trans,octa-cis-undecaprenyl diphosphate + di-trans,octa-cis-undecaprenyl diphosphate + H(+). It participates in cell wall biogenesis; peptidoglycan biosynthesis. Its function is as follows. Peptidoglycan polymerase that catalyzes glycan chain elongation from lipid-linked precursors. This Rhodopseudomonas palustris (strain HaA2) protein is Biosynthetic peptidoglycan transglycosylase.